The following is a 333-amino-acid chain: Foldase protein PrsA (333 aa).

The N-terminal stretch at 1–22 (MKSAKQIATALLVGMFTFSAVG) is a signal peptide. Cys23 carries N-palmitoyl cysteine lipidation. Cys23 carries the S-diacylglycerol cysteine lipid modification. One can recognise a PpiC domain in the interval 192–283 (PNTVHLAHIL…FGWHVIKCIK (92 aa)).

Belongs to the PrsA family.

The protein localises to the cell membrane. The enzyme catalyses [protein]-peptidylproline (omega=180) = [protein]-peptidylproline (omega=0). Its function is as follows. Plays a major role in protein secretion by helping the post-translocational extracellular folding of several secreted proteins. The polypeptide is Foldase protein PrsA (Clostridium acetobutylicum (strain ATCC 824 / DSM 792 / JCM 1419 / IAM 19013 / LMG 5710 / NBRC 13948 / NRRL B-527 / VKM B-1787 / 2291 / W)).